The chain runs to 405 residues: FAD-dependent monooxygenase thnD (405 aa).

The FAD site is built by glutamate 30, alanine 45, arginine 106, aspartate 308, and glycine 321.

It belongs to the paxM FAD-dependent monooxygenase family. The cofactor is FAD.

Functionally, FAD-dependent monooxygenase; part of the gene cluster that produces the tetronate natural products trihazones. Transcription analysis of thnD confirmed this gene is expressed, hence its role in the biosynthetic pathway remains cryptic. The pathway begins with the formation of trihazone A by the hybrid PKS-NRPS synthetase thnA and the trans-enoyl reductase thnE. Trihazone A is further decarboxylated by the 2-oxoglutarate-dependent dioxygenase thnC to produce trihazone D. The function of the FAD-dependent monooxygenase thnD has still to be identified. The sequence is that of FAD-dependent monooxygenase thnD from Trichoderma harzianum (Hypocrea lixii).